The primary structure comprises 355 residues: Guanine nucleotide-binding protein subunit beta-5a (355 aa).

A disordered region spans residues 1-23 (MAAQEEPAQPGDSLATLKSESDT). WD repeat units follow at residues 63 to 102 (GHGNKVLCMDWCKDKRRIVSSSQDGKVIVWDAFTTNKEHA), 105 to 144 (MPCTWVMACAYAPSGCAVACGGLDNKCSVYPLSLDKNENL), 153 to 194 (MHTN…QSFH), 195 to 238 (GHAA…QSFE), 239 to 278 (SHDSDINSVRYYPSGDAFASGSDDATCRLYDLRADREVAI), 280 to 322 (SKES…RVSI), and 325 to 355 (GHENRVSTLRVSPDGTAFCSGSWDHTLRIWA).

The protein belongs to the WD repeat G protein beta family. May interact with RGS9; this interaction stabilizes both proteins and increases RGS9 GTPase-activating protein (GAP) activity, hence accelerating the deactivation of D(2) dopamine receptor-mediated signaling.

The protein localises to the membrane. Functionally, enhances GTPase-activating protein (GAP) activity of regulator of G protein signaling (RGS) proteins, such as RGS7 and RGS9, hence involved in the termination of the signaling initiated by the G protein coupled receptors (GPCRs) by accelerating the GTP hydrolysis on the G-alpha subunits, thereby promoting their inactivation. Increases RGS7 GTPase-activating protein (GAP) activity, thereby regulating mood and cognition. Increases RGS9 GTPase-activating protein (GAP) activity, hence contributes to the deactivation of G protein signaling initiated by D(2) dopamine receptors. Along with gnb5b, plays an important role in neuronal signaling, including in the parasympathetic, but not sympathetic, control of heart rate. The chain is Guanine nucleotide-binding protein subunit beta-5a from Danio rerio (Zebrafish).